Consider the following 431-residue polypeptide: MTWLSGLYFICIASLIFCAIGVILAGVILLSRKLFIKVHPCKLKINDNEELTKTVESGQTLLVSLLSSGIPIPSPCGGKATCKQCKVRVVKNADEPLETDRSTFSKRQLEEGWRLSCQCKVQHDMSLEIEERYLNASSWEGTVISNDNVATFIKELVVAVDPNKPIPFKPGGYLQITVPSYKTNSSDWKQTMAPEYYSDWEHFHLFDQVIDNSQLPADSANKAYSLASYPAELPTIKFNIRIATPPFINGKPNSEIPWGVCSSYVFSLKPGDKITVSGPYGESFMKDDDRPLIFLIGGAGSSFGRSHILDLLLNKHSKREIDLWYGARSLKENIYQEEYENLERQFPNFHYHLVLSEPLPEDIAAGWDKDDPTKTNFLFRAFNLGQLSRLDNPEDYLYYVCGPPLHNSSILKLLGDYGVERSSIILDDFGS.

Residues 9-29 (FICIASLIFCAIGVILAGVIL) traverse the membrane as a helical segment. The 2Fe-2S ferredoxin-type domain maps to 39–133 (HPCKLKINDN…DMSLEIEERY (95 aa)). Cysteine 76, cysteine 82, cysteine 85, and cysteine 117 together coordinate [2Fe-2S] cluster. One can recognise an FAD-binding FR-type domain in the interval 136-286 (ASSWEGTVIS…SGPYGESFMK (151 aa)). Residues 289–413 (DRPLIFLIGG…PLHNSSILKL (125 aa)) form a catalytic region.

It belongs to the NqrF family. In terms of assembly, composed of six subunits; NqrA, NqrB, NqrC, NqrD, NqrE and NqrF. Requires [2Fe-2S] cluster as cofactor. FAD is required as a cofactor.

It is found in the cell inner membrane. It catalyses the reaction a ubiquinone + n Na(+)(in) + NADH + H(+) = a ubiquinol + n Na(+)(out) + NAD(+). In terms of biological role, NQR complex catalyzes the reduction of ubiquinone-1 to ubiquinol by two successive reactions, coupled with the transport of Na(+) ions from the cytoplasm to the periplasm. The first step is catalyzed by NqrF, which accepts electrons from NADH and reduces ubiquinone-1 to ubisemiquinone by a one-electron transfer pathway. The chain is Na(+)-translocating NADH-quinone reductase subunit F from Chlamydia pneumoniae (Chlamydophila pneumoniae).